We begin with the raw amino-acid sequence, 65 residues long: Large ribosomal subunit protein bL31 (65 aa).

The Zn(2+) site is built by Cys-16, Cys-18, Cys-36, and Cys-39.

The protein belongs to the bacterial ribosomal protein bL31 family. Type A subfamily. As to quaternary structure, part of the 50S ribosomal subunit. The cofactor is Zn(2+).

Binds the 23S rRNA. In Brevibacillus brevis (strain 47 / JCM 6285 / NBRC 100599), this protein is Large ribosomal subunit protein bL31.